Consider the following 310-residue polypeptide: ADP-L-glycero-D-manno-heptose-6-epimerase (310 aa).

NADP(+) is bound by residues 10–11 (FI), 31–32 (DN), K38, K53, 75–79 (EGACS), and N92. Y140 (proton acceptor) is an active-site residue. K144 is an NADP(+) binding site. N169 serves as a coordination point for substrate. 2 residues coordinate NADP(+): V170 and K178. K178 (proton acceptor) is an active-site residue. Residues S180, H187, 201 to 204 (FEGS), and R209 contribute to the substrate site. K267 is modified (N6-acetyllysine). Y272 lines the substrate pocket.

Belongs to the NAD(P)-dependent epimerase/dehydratase family. HldD subfamily. As to quaternary structure, homopentamer. The cofactor is NADP(+).

It catalyses the reaction ADP-D-glycero-beta-D-manno-heptose = ADP-L-glycero-beta-D-manno-heptose. It participates in nucleotide-sugar biosynthesis; ADP-L-glycero-beta-D-manno-heptose biosynthesis; ADP-L-glycero-beta-D-manno-heptose from D-glycero-beta-D-manno-heptose 7-phosphate: step 4/4. Catalyzes the interconversion between ADP-D-glycero-beta-D-manno-heptose and ADP-L-glycero-beta-D-manno-heptose via an epimerization at carbon 6 of the heptose. This Escherichia coli (strain SMS-3-5 / SECEC) protein is ADP-L-glycero-D-manno-heptose-6-epimerase.